The sequence spans 120 residues: Large ribosomal subunit protein bL19 (120 aa).

The protein belongs to the bacterial ribosomal protein bL19 family.

In terms of biological role, this protein is located at the 30S-50S ribosomal subunit interface and may play a role in the structure and function of the aminoacyl-tRNA binding site. The protein is Large ribosomal subunit protein bL19 of Gloeothece citriformis (strain PCC 7424) (Cyanothece sp. (strain PCC 7424)).